Here is a 490-residue protein sequence, read N- to C-terminus: Argininosuccinate lyase (490 aa).

This sequence belongs to the lyase 1 family. Argininosuccinate lyase subfamily.

It is found in the cytoplasm. The catalysed reaction is 2-(N(omega)-L-arginino)succinate = fumarate + L-arginine. It participates in amino-acid biosynthesis; L-arginine biosynthesis; L-arginine from L-ornithine and carbamoyl phosphate: step 3/3. The protein is Argininosuccinate lyase of Bifidobacterium longum subsp. infantis (strain ATCC 15697 / DSM 20088 / JCM 1222 / NCTC 11817 / S12).